The sequence spans 260 residues: Flap endonuclease Xni (260 aa).

Position 104 (aspartate 104) interacts with Mg(2+). The 5'-3' exonuclease domain occupies valine 160–leucine 249. Leucine 171, alanine 172, proline 180, valine 182, and isoleucine 185 together coordinate K(+). Residues glycine 184–serine 189 form an interaction with DNA region.

The protein belongs to the Xni family. It depends on Mg(2+) as a cofactor. K(+) serves as cofactor.

Has flap endonuclease activity. During DNA replication, flap endonucleases cleave the 5'-overhanging flap structure that is generated by displacement synthesis when DNA polymerase encounters the 5'-end of a downstream Okazaki fragment. The sequence is that of Flap endonuclease Xni from Pectobacterium carotovorum subsp. carotovorum (strain PC1).